Here is a 451-residue protein sequence, read N- to C-terminus: Tubulin alpha-2 chain (451 aa).

A GTP-binding site is contributed by Q11. Residue K40 is modified to N6-acetyllysine. GTP-binding residues include E71, G144, T145, T179, N206, and N228. E71 serves as a coordination point for Mg(2+). E254 is a catalytic residue.

Belongs to the tubulin family. Dimer of alpha and beta chains. A typical microtubule is a hollow water-filled tube with an outer diameter of 25 nm and an inner diameter of 15 nM. Alpha-beta heterodimers associate head-to-tail to form protofilaments running lengthwise along the microtubule wall with the beta-tubulin subunit facing the microtubule plus end conferring a structural polarity. Microtubules usually have 13 protofilaments but different protofilament numbers can be found in some organisms and specialized cells. Mg(2+) serves as cofactor. In terms of processing, undergoes a tyrosination/detyrosination cycle, the cyclic removal and re-addition of a C-terminal tyrosine residue by the enzymes tubulin tyrosine carboxypeptidase (TTCP) and tubulin tyrosine ligase (TTL), respectively. Acetylation of alpha chains at Lys-40 stabilizes microtubules and affects affinity and processivity of microtubule motors. This modification has a role in multiple cellular functions, ranging from cell motility, cell cycle progression or cell differentiation to intracellular trafficking and signaling.

The protein resides in the cytoplasm. It is found in the cytoskeleton. The enzyme catalyses GTP + H2O = GDP + phosphate + H(+). Tubulin is the major constituent of microtubules, a cylinder consisting of laterally associated linear protofilaments composed of alpha- and beta-tubulin heterodimers. Microtubules grow by the addition of GTP-tubulin dimers to the microtubule end, where a stabilizing cap forms. Below the cap, tubulin dimers are in GDP-bound state, owing to GTPase activity of alpha-tubulin. In Hordeum vulgare (Barley), this protein is Tubulin alpha-2 chain (TUBA2).